The following is a 157-amino-acid chain: Small ribosomal subunit protein uS7 (157 aa).

It belongs to the universal ribosomal protein uS7 family. As to quaternary structure, part of the 30S ribosomal subunit. Contacts proteins S9 and S11.

In terms of biological role, one of the primary rRNA binding proteins, it binds directly to 16S rRNA where it nucleates assembly of the head domain of the 30S subunit. Is located at the subunit interface close to the decoding center, probably blocks exit of the E-site tRNA. The chain is Small ribosomal subunit protein uS7 from Chlamydia caviae (strain ATCC VR-813 / DSM 19441 / 03DC25 / GPIC) (Chlamydophila caviae).